Here is a 278-residue protein sequence, read N- to C-terminus: MRNRAVLFGLFFIGYSSCVFHATPTRASLVENPDVESTHVEQWDSNGKRLLQVDGPKRILAEERGMSEGILPAAEAVEKTKVSEKAVPRASLGSKLNPMTWPKRILHKLKLWYARFLHWLLRKATVDEKTIDRSMMNGLTPSNLKRVKNDILHYSSSVPHDKIEIETDYDSYVEHFFGQFKGLDKDPPVFEMDKWNNLEKEMTKAEGYLKRRALNTVSRNIDKGLSNEQLISLDVSPFVYMRLLEKRGVFKDVENNKDKIDQLKDYIKAYKEHLMVEQ.

The N-terminal stretch at 1–18 (MRNRAVLFGLFFIGYSSC) is a signal peptide. A RxLR-dEER motif is present at residues 49 to 64 (RLLQVDGPKRILAEER).

The protein belongs to the RxLR effector family.

It is found in the secreted. Its subcellular location is the host endoplasmic reticulum membrane. Secreted effector that completely suppresses the host cell death induced by cell death-inducing proteins. In Plasmopara viticola (Downy mildew of grapevine), this protein is Secreted RxLR effector protein 151.